The sequence spans 305 residues: MSLRHFLTLSDLTKQELENLIKRASELRHMQHAGEIYQPFVGRTLGMIFEKSSTRTRISFETGMGQFGGSAIFLSPNDTQLGRGEPIEDSARVISSMVDIIMIRTFGHEKVETFAKYSSVPIINALTDEFHPCQLLADMQTYYEHRGSIENKIVTWVGDGNNMCASYMQAANQFGFELRVAAPYGFEPDPELMKRFSHCVSIVENVQEAAKDSHLIVTDVWASMGQESEQNTRARRFSSYQVTPSLLDKADSEVVFMHCLPAHRGEEISHDMLDDPRSVVWDEAENRLHAQKALMEFLLKDKIKI.

Carbamoyl phosphate-binding positions include 53-56, Gln80, Arg104, and 131-134; these read STRT and HPCQ. Residues Asn162, Asp219, and 223–224 each bind L-ornithine; that span reads SM. Carbamoyl phosphate contacts are provided by residues 259–260 and Arg287; that span reads CL.

The protein belongs to the aspartate/ornithine carbamoyltransferase superfamily. OTCase family.

The protein resides in the cytoplasm. It catalyses the reaction carbamoyl phosphate + L-ornithine = L-citrulline + phosphate + H(+). Its pathway is amino-acid biosynthesis; L-arginine biosynthesis; L-arginine from L-ornithine and carbamoyl phosphate: step 1/3. In terms of biological role, reversibly catalyzes the transfer of the carbamoyl group from carbamoyl phosphate (CP) to the N(epsilon) atom of ornithine (ORN) to produce L-citrulline. This Psychrobacter cryohalolentis (strain ATCC BAA-1226 / DSM 17306 / VKM B-2378 / K5) protein is Ornithine carbamoyltransferase.